We begin with the raw amino-acid sequence, 251 residues long: DNA polymerase sliding clamp 2 (251 aa).

Belongs to the PCNA family. As to quaternary structure, heterotrimer. The subunits circularize to form a toroid; DNA passes through its center. Replication factor C (RFC) is required to load the toroid on the DNA.

Its function is as follows. Sliding clamp subunit that acts as a moving platform for DNA processing. Responsible for tethering the catalytic subunit of DNA polymerase and other proteins to DNA during high-speed replication. In Aeropyrum pernix (strain ATCC 700893 / DSM 11879 / JCM 9820 / NBRC 100138 / K1), this protein is DNA polymerase sliding clamp 2.